Consider the following 749-residue polypeptide: MASIDPYQHIIVEHQYSHRFTVTVIKATNVTKGTFGDMLDTPDPYVELYISSAPDSRKRTKHFNNNINPVWNETFEFILDPNQDNVLEITLMDANYVMDESLGTTTFPISSVKPGEKKQVPFTFNKVTEMILEFLLEVCSSTDLRFSMALCDQEKFFRQKRKNQVINGLRKLLGPEKTKDLNPTSRDVPVIAVLGSGGGFRAMIGFSGVMKALFESGVLDCVTYIAGLSGSTWYMSALYSHADFPNKGPKEINKELMNNVSHNPLLLLTPQKVKRYIEALWKKKSSGQPVTFTDIFAMLIGETLIKDRMNRKLSHMQEKISHGQCPLPLFTCLHVKPDVSELMFADWVEFSPYEIGMAKYGTFMPPDHFGSKFFMGTVIKKYEENPLHFLMGVWGSAFSILINRVLGVSTNNQGSTMEEEIENLKPKHILGNDSSDSDDEMQEPKGTENSKAEEEYQRNNQASWVQRMLMALLGDSALFNTREGRAGKVHNFMLGLNLNTSYPYSPLSGLCTQQSMEEDEFDAAVADPDEFEQIYEPLDVKSKKIHIVDSGLTFNLPYPLILRPQRGVDLIISFDFSARPSDSSPPFKELLLAEKWARMNKLPFPKIDPHVFDREGLKECYIFKPKNPSVEKDCPTVIHFVLANLQFRNFKAPGVPRETAEEKEFADFDIFDDPETPFSTFNFQYPNEAFKRLHDLMEFNTLNNINVIKQAMVESIEYRKQHPSRCSVSLNDVEARKLLHKDSQSKFQM.

Residues 1 to 124 form the C2 domain; the sequence is MASIDPYQHI…GEKKQVPFTF (124 aa). The segment at 1–178 is phospholipid binding; that stretch reads MASIDPYQHI…LRKLLGPEKT (178 aa). Residues Asp40, Thr41, Asp43, Asn65, Asp93, Ala94, and Asn95 each coordinate Ca(2+). The PLA2c domain occupies 138-740; it reads VCSSTDLRFS…NDVEARKLLH (603 aa). The Nucleophile role is filled by Ser229. Residues 417–458 form a disordered region; it reads MEEEIENLKPKHILGNDSSDSDDEMQEPKGTENSKAEEEYQR. The span at 442–457 shows a compositional bias: basic and acidic residues; sequence QEPKGTENSKAEEEYQ. The active-site Proton acceptor is Asp549.

The protein resides in the cytoplasm. It localises to the cytoplasmic vesicle. The catalysed reaction is a 1,2-diacyl-sn-glycero-3-phosphocholine + H2O = a 1-acyl-sn-glycero-3-phosphocholine + a fatty acid + H(+). It catalyses the reaction a 1-acyl-sn-glycero-3-phosphocholine + H2O = sn-glycerol 3-phosphocholine + a fatty acid + H(+). Stimulated by agonists such as ATP, EGF, thrombin and bradykinin as well as by cytosolic Ca(2+). Functionally, selectively hydrolyzes arachidonyl phospholipids in the sn-2 position releasing arachidonic acid. Together with its lysophospholipid activity, it is implicated in the initiation of the inflammatory response. This chain is Cytosolic phospholipase A2 (pla2g4a), found in Xenopus tropicalis (Western clawed frog).